The chain runs to 108 residues: T-cell acute lymphocytic leukemia protein 2 homolog (108 aa).

The bHLH domain occupies 2-54 (TRKIFTNTRERWRQQSVNNAFAKLRKLIPTHPPDKKLSKNETLRLAMRYINFL). A disordered region spans residues 76-108 (GLFPPKTRLPDEDDRTLLNDYRVPSPGPSHGAP).

This chain is T-cell acute lymphocytic leukemia protein 2 homolog (Tal2), found in Mus musculus (Mouse).